Here is a 178-residue protein sequence, read N- to C-terminus: CASP-like protein 2A2 (178 aa).

The Cytoplasmic segment spans residues 1-22 (MDKTDQTAIDESALVLNRTEKS). The helical transmembrane segment at 23 to 43 (AEAVLRVASMALSITGLVIMI) threads the bilayer. The Extracellular segment spans residues 44-69 (KNSISNEFGSVSYSNIGAFMYLVSAN). A helical transmembrane segment spans residues 70-90 (GVCAAYSLLSALAILALPCPI). Topologically, residues 91 to 96 (SKVQVR) are cytoplasmic. Residues 97–117 (TLFLLDQVVTYVVLAAGAVSA) form a helical membrane-spanning segment. Residues 118–145 (ETVYLAYYGNIPITWSSACDSYGSFCHN) are Extracellular-facing. The helical transmembrane segment at 146-166 (ALISVVFTFVVSLLYMLLSLI) threads the bilayer. Over 167–178 (SSYRLFTRFEAP) the chain is Cytoplasmic.

Belongs to the Casparian strip membrane proteins (CASP) family. As to quaternary structure, homodimer and heterodimers. As to expression, mostly expressed in flowers and buds and, to a lower extent, in roots and yellow siliques. Localized in the floral organ abscission zone.

The protein resides in the cell membrane. Its function is as follows. Involved in floral organ shedding. This is CASP-like protein 2A2 from Arabidopsis thaliana (Mouse-ear cress).